A 739-amino-acid polypeptide reads, in one-letter code: Phosphoribosylformylglycinamidine synthase subunit PurL (739 aa).

Residue H54 is part of the active site. Residues Y57 and K96 each contribute to the ATP site. E98 is a Mg(2+) binding site. Substrate is bound by residues 99–102 (SHNH) and R121. H100 serves as the catalytic Proton acceptor. A Mg(2+)-binding site is contributed by D122. Q245 provides a ligand contact to substrate. Position 273 (D273) interacts with Mg(2+). 317–319 (ESQ) contacts substrate. Residues D500 and G537 each coordinate ATP. Residue N538 coordinates Mg(2+). S540 serves as a coordination point for substrate.

It belongs to the FGAMS family. As to quaternary structure, monomer. Part of the FGAM synthase complex composed of 1 PurL, 1 PurQ and 2 PurS subunits.

It localises to the cytoplasm. The catalysed reaction is N(2)-formyl-N(1)-(5-phospho-beta-D-ribosyl)glycinamide + L-glutamine + ATP + H2O = 2-formamido-N(1)-(5-O-phospho-beta-D-ribosyl)acetamidine + L-glutamate + ADP + phosphate + H(+). It functions in the pathway purine metabolism; IMP biosynthesis via de novo pathway; 5-amino-1-(5-phospho-D-ribosyl)imidazole from N(2)-formyl-N(1)-(5-phospho-D-ribosyl)glycinamide: step 1/2. Functionally, part of the phosphoribosylformylglycinamidine synthase complex involved in the purines biosynthetic pathway. Catalyzes the ATP-dependent conversion of formylglycinamide ribonucleotide (FGAR) and glutamine to yield formylglycinamidine ribonucleotide (FGAM) and glutamate. The FGAM synthase complex is composed of three subunits. PurQ produces an ammonia molecule by converting glutamine to glutamate. PurL transfers the ammonia molecule to FGAR to form FGAM in an ATP-dependent manner. PurS interacts with PurQ and PurL and is thought to assist in the transfer of the ammonia molecule from PurQ to PurL. The protein is Phosphoribosylformylglycinamidine synthase subunit PurL of Bacillus cereus (strain G9842).